Consider the following 443-residue polypeptide: Histidinol dehydrogenase (443 aa).

NAD(+)-binding residues include Tyr133, Gln191, and Asn214. The substrate site is built by Ser240, Gln262, and His265. 2 residues coordinate Zn(2+): Gln262 and His265. Residues Glu329 and His330 each act as proton acceptor in the active site. Residues His330, Asp363, Glu417, and His422 each coordinate substrate. Asp363 contributes to the Zn(2+) binding site. Residue His422 coordinates Zn(2+).

The protein belongs to the histidinol dehydrogenase family. Homodimer. Zn(2+) is required as a cofactor.

The catalysed reaction is L-histidinol + 2 NAD(+) + H2O = L-histidine + 2 NADH + 3 H(+). It functions in the pathway amino-acid biosynthesis; L-histidine biosynthesis; L-histidine from 5-phospho-alpha-D-ribose 1-diphosphate: step 9/9. Its function is as follows. Catalyzes the sequential NAD-dependent oxidations of L-histidinol to L-histidinaldehyde and then to L-histidine. This is Histidinol dehydrogenase from Yersinia pestis.